Here is a 271-residue protein sequence, read N- to C-terminus: MSRIAATFARLAGQGRKALIPYVTAGDPFADITVDLMHAMAKAGADVIELGVPFSDPMADGPVIQRASERALSRNISTADVLAMVARFRETDDTTPVVLMGYANPVERYGPDRFVDDARAAGVDGVLVVDYPPQECEAFADRLRAADLDPIFLLAPTSTDARMADVGRIATGYVYYVSLKGVTGSGNLDTDAVARMIPRIRSHVSVPVGVGFGIRDAATAVAVARVSDAVVIGSRIIQLIENEPRERVVPVAAGFIAEIRTALDTLQGTHA.

Active-site proton acceptor residues include E49 and D60.

Belongs to the TrpA family. In terms of assembly, tetramer of two alpha and two beta chains.

It catalyses the reaction (1S,2R)-1-C-(indol-3-yl)glycerol 3-phosphate + L-serine = D-glyceraldehyde 3-phosphate + L-tryptophan + H2O. Its pathway is amino-acid biosynthesis; L-tryptophan biosynthesis; L-tryptophan from chorismate: step 5/5. Its function is as follows. The alpha subunit is responsible for the aldol cleavage of indoleglycerol phosphate to indole and glyceraldehyde 3-phosphate. The sequence is that of Tryptophan synthase alpha chain from Leptothrix cholodnii (strain ATCC 51168 / LMG 8142 / SP-6) (Leptothrix discophora (strain SP-6)).